Reading from the N-terminus, the 329-residue chain is MASQLTDAFARKFYYLRLSITDVCNFRCTYCLPDGYKPGGVTNNGFLTVDEIRRVTRAFASLGTEKVRLTGGEPSLRRDFTDIIAAVGENDAIRQIAVTTNGYRLARDAASWREAGLTGVNVSVDSLDARQFHAITGQDKFRQVMAGIDAAFDAGFEKVKVNTVLMRDVNHHQLDTFLAWIQPRPIQLRFIELMETGEGSDLFRKHHISGQVLRDELIKRGWIHQLRQRSDGPAQVFCHPDYAGEIGLIMPYEKDFCATCNRLRVSSVGKLHLCLFGDGGVSLRDLLQDDAQQYALEERISDALREKKQTHFLHQSNTGITQNLSYIGG.

The Radical SAM core domain occupies 8–234 (AFARKFYYLR…QLRQRSDGPA (227 aa)). Arg-17 serves as a coordination point for GTP. Residues Cys-24 and Cys-28 each coordinate [4Fe-4S] cluster. An S-adenosyl-L-methionine-binding site is contributed by Tyr-30. Cys-31 contributes to the [4Fe-4S] cluster binding site. GTP is bound at residue Arg-68. Residue Gly-72 participates in S-adenosyl-L-methionine binding. GTP is bound at residue Thr-99. S-adenosyl-L-methionine is bound at residue Ser-123. Lys-160 contacts GTP. Met-194 contacts S-adenosyl-L-methionine. [4Fe-4S] cluster contacts are provided by Cys-257 and Cys-260. GTP is bound at residue 262–264 (RLR). Cys-274 serves as a coordination point for [4Fe-4S] cluster.

Belongs to the radical SAM superfamily. MoaA family. Monomer and homodimer. The cofactor is [4Fe-4S] cluster.

The catalysed reaction is GTP + AH2 + S-adenosyl-L-methionine = (8S)-3',8-cyclo-7,8-dihydroguanosine 5'-triphosphate + 5'-deoxyadenosine + L-methionine + A + H(+). It functions in the pathway cofactor biosynthesis; molybdopterin biosynthesis. Its function is as follows. Catalyzes the cyclization of GTP to (8S)-3',8-cyclo-7,8-dihydroguanosine 5'-triphosphate. In Salmonella paratyphi B (strain ATCC BAA-1250 / SPB7), this protein is GTP 3',8-cyclase.